The sequence spans 446 residues: Scytalone dehydratase-like protein Arp1 (446 aa).

Tyr323 lines the substrate pocket. Residues His358 and His383 contribute to the active site. Asn404 lines the substrate pocket.

Belongs to the scytalone dehydratase family. Homotrimer. Each subunit contains an active site, located in the central part of the hydrophobic core of the monomer, which functions independently.

Functionally, scytalone dehydratase-like protein; part of the Pks2 gene cluster that mediates the formation of infectious structures (appressoria), enabling these fungi to kill insects faster. The product of the Pks2 gene cluster is different from the one of Pks1 and has still not been identified. This Metarhizium acridum (strain CQMa 102) protein is Scytalone dehydratase-like protein Arp1.